The chain runs to 301 residues: Probable alpha-L-glutamate ligase (301 aa).

In terms of domain architecture, ATP-grasp spans 104-287 (LQLLSRRGIG…VAGIIIEHIE (184 aa)). ATP contacts are provided by residues Lys-141, 178-179 (EY), Asp-187, and 211-213 (RSN). Asp-248, Glu-260, and Asn-262 together coordinate Mg(2+). Mn(2+) contacts are provided by Asp-248, Glu-260, and Asn-262.

This sequence belongs to the RimK family. Mg(2+) is required as a cofactor. The cofactor is Mn(2+).

This Pseudomonas fluorescens (strain ATCC BAA-477 / NRRL B-23932 / Pf-5) protein is Probable alpha-L-glutamate ligase.